A 213-amino-acid polypeptide reads, in one-letter code: Putative tRNA methyltransferase MPN_351 (213 aa).

Belongs to the TrmK family.

The protein resides in the cytoplasm. This Mycoplasma pneumoniae (strain ATCC 29342 / M129 / Subtype 1) (Mycoplasmoides pneumoniae) protein is Putative tRNA methyltransferase MPN_351.